A 558-amino-acid chain; its full sequence is Membrane protein insertase YidC (558 aa).

Transmembrane regions (helical) follow at residues 6 to 26, 359 to 379, 434 to 454, 480 to 500, and 513 to 533; these read SFFI…WDDE, FIHT…TVII, LGGC…YYML, ILPI…PTTI, and LVIF…YYII.

The protein belongs to the OXA1/ALB3/YidC family. Type 1 subfamily. In terms of assembly, interacts with the Sec translocase complex via SecD. Specifically interacts with transmembrane segments of nascent integral membrane proteins during membrane integration.

The protein resides in the cell inner membrane. In terms of biological role, required for the insertion and/or proper folding and/or complex formation of integral membrane proteins into the membrane. Involved in integration of membrane proteins that insert both dependently and independently of the Sec translocase complex, as well as at least some lipoproteins. Aids folding of multispanning membrane proteins. In Blochmanniella floridana, this protein is Membrane protein insertase YidC.